Here is a 141-residue protein sequence, read N- to C-terminus: Nucleoside diphosphate kinase (141 aa).

Residues K11, F59, R87, T93, R104, and N114 each coordinate ATP. Residue H117 is the Pros-phosphohistidine intermediate of the active site.

The protein belongs to the NDK family. Homotetramer. Requires Mg(2+) as cofactor.

The protein resides in the cytoplasm. It catalyses the reaction a 2'-deoxyribonucleoside 5'-diphosphate + ATP = a 2'-deoxyribonucleoside 5'-triphosphate + ADP. The catalysed reaction is a ribonucleoside 5'-diphosphate + ATP = a ribonucleoside 5'-triphosphate + ADP. Major role in the synthesis of nucleoside triphosphates other than ATP. The ATP gamma phosphate is transferred to the NDP beta phosphate via a ping-pong mechanism, using a phosphorylated active-site intermediate. This is Nucleoside diphosphate kinase from Janthinobacterium sp. (strain Marseille) (Minibacterium massiliensis).